A 448-amino-acid chain; its full sequence is ATP-dependent protease ATPase subunit HslU (448 aa).

ATP-binding positions include I18, 60–65 (GVGKTE), D261, E326, and R398.

It belongs to the ClpX chaperone family. HslU subfamily. In terms of assembly, a double ring-shaped homohexamer of HslV is capped on each side by a ring-shaped HslU homohexamer. The assembly of the HslU/HslV complex is dependent on binding of ATP.

It localises to the cytoplasm. ATPase subunit of a proteasome-like degradation complex; this subunit has chaperone activity. The binding of ATP and its subsequent hydrolysis by HslU are essential for unfolding of protein substrates subsequently hydrolyzed by HslV. HslU recognizes the N-terminal part of its protein substrates and unfolds these before they are guided to HslV for hydrolysis. The polypeptide is ATP-dependent protease ATPase subunit HslU (Paraburkholderia phytofirmans (strain DSM 17436 / LMG 22146 / PsJN) (Burkholderia phytofirmans)).